A 59-amino-acid chain; its full sequence is Large ribosomal subunit protein bL32 (59 aa).

The interval 1–59 (MAVQQNKKSPSKRGMHRSHDHLSVAPLAVEPTTGETHLRHHVSPNGYYRGRKVIKTKND) is disordered. Basic residues-rich tracts occupy residues 9-19 (SPSKRGMHRSH) and 49-59 (RGRKVIKTKND).

This sequence belongs to the bacterial ribosomal protein bL32 family.

In Cupriavidus metallidurans (strain ATCC 43123 / DSM 2839 / NBRC 102507 / CH34) (Ralstonia metallidurans), this protein is Large ribosomal subunit protein bL32.